The following is a 507-amino-acid chain: ATP synthase subunit alpha, chloroplastic (507 aa).

An ATP-binding site is contributed by 170 to 177; it reads GDRQTGKT.

This sequence belongs to the ATPase alpha/beta chains family. F-type ATPases have 2 components, CF(1) - the catalytic core - and CF(0) - the membrane proton channel. CF(1) has five subunits: alpha(3), beta(3), gamma(1), delta(1), epsilon(1). CF(0) has four main subunits: a, b, b' and c.

Its subcellular location is the plastid. The protein resides in the chloroplast thylakoid membrane. The enzyme catalyses ATP + H2O + 4 H(+)(in) = ADP + phosphate + 5 H(+)(out). Its function is as follows. Produces ATP from ADP in the presence of a proton gradient across the membrane. The alpha chain is a regulatory subunit. This Sorghum bicolor (Sorghum) protein is ATP synthase subunit alpha, chloroplastic.